Here is a 349-residue protein sequence, read N- to C-terminus: DNA-directed RNA polymerase subunit alpha (349 aa).

Residues 1 to 226 are alpha N-terminal domain (alpha-NTD); that stretch reads MLIAQRPTLI…GLFGLAQELN (226 aa). The interval 241 to 349 is alpha C-terminal domain (alpha-CTD); the sequence is AALAADLALP…GAEFIETEQY (109 aa). Residues 309–349 are disordered; sequence KDSPPGFDPRQAVDTYGTDAYSPSFSDPSDDGAEFIETEQY. A compositionally biased stretch (acidic residues) spans 336–349; that stretch reads PSDDGAEFIETEQY.

The protein belongs to the RNA polymerase alpha chain family. As to quaternary structure, homodimer. The RNAP catalytic core consists of 2 alpha, 1 beta, 1 beta' and 1 omega subunit. When a sigma factor is associated with the core the holoenzyme is formed, which can initiate transcription.

The enzyme catalyses RNA(n) + a ribonucleoside 5'-triphosphate = RNA(n+1) + diphosphate. In terms of biological role, DNA-dependent RNA polymerase catalyzes the transcription of DNA into RNA using the four ribonucleoside triphosphates as substrates. This Frankia casuarinae (strain DSM 45818 / CECT 9043 / HFP020203 / CcI3) protein is DNA-directed RNA polymerase subunit alpha.